The chain runs to 217 residues: Translation initiation factor 6 (217 aa).

Belongs to the eIF-6 family.

In terms of biological role, binds to the 50S ribosomal subunit and prevents its association with the 30S ribosomal subunit to form the 70S initiation complex. The chain is Translation initiation factor 6 from Methanococcoides burtonii (strain DSM 6242 / NBRC 107633 / OCM 468 / ACE-M).